We begin with the raw amino-acid sequence, 506 residues long: RNA-splicing ligase RtcB homolog (506 aa).

The Mn(2+) site is built by D120, C123, H228, H260, and H354. 227 to 231 lines the GMP pocket; sequence NHYAE. Residues 354–355, 403–406, S410, 429–432, and K505 contribute to the GMP site; these read HN, GGTM, and HGAG. Catalysis depends on H429, which acts as the GMP-histidine intermediate.

Belongs to the RtcB family. In terms of assembly, catalytic component of the tRNA-splicing ligase complex. It depends on Mn(2+) as a cofactor.

It catalyses the reaction a 3'-end 3'-phospho-ribonucleotide-RNA + a 5'-end dephospho-ribonucleoside-RNA + GTP = a ribonucleotidyl-ribonucleotide-RNA + GMP + diphosphate. The catalysed reaction is a 3'-end 2',3'-cyclophospho-ribonucleotide-RNA + a 5'-end dephospho-ribonucleoside-RNA + GTP + H2O = a ribonucleotidyl-ribonucleotide-RNA + GMP + diphosphate + H(+). Its function is as follows. Catalytic subunit of the tRNA-splicing ligase complex that acts by directly joining spliced tRNA halves to mature-sized tRNAs by incorporating the precursor-derived splice junction phosphate into the mature tRNA as a canonical 3',5'-phosphodiester. May act as an RNA ligase with broad substrate specificity, and may function toward other RNAs. This Drosophila melanogaster (Fruit fly) protein is RNA-splicing ligase RtcB homolog.